Here is a 330-residue protein sequence, read N- to C-terminus: ADP-L-glycero-D-manno-heptose-6-epimerase (330 aa).

NADP(+) is bound by residues 11–12 (FI), 32–33 (DD), Gln39, Gln54, 75–79 (QGACA), and Asn92. Catalysis depends on Tyr139, which acts as the Proton acceptor. Lys143 is an NADP(+) binding site. Residue Asn168 participates in substrate binding. Residues Val169 and Lys177 each contribute to the NADP(+) site. The Proton acceptor role is filled by Lys177. Substrate-binding positions include Arg179, His186, 200-203 (FGEH), Arg213, and Tyr292.

Belongs to the NAD(P)-dependent epimerase/dehydratase family. HldD subfamily. As to quaternary structure, homopentamer. The cofactor is NADP(+).

The enzyme catalyses ADP-D-glycero-beta-D-manno-heptose = ADP-L-glycero-beta-D-manno-heptose. Its pathway is nucleotide-sugar biosynthesis; ADP-L-glycero-beta-D-manno-heptose biosynthesis; ADP-L-glycero-beta-D-manno-heptose from D-glycero-beta-D-manno-heptose 7-phosphate: step 4/4. It participates in bacterial outer membrane biogenesis; LPS core biosynthesis. Functionally, catalyzes the interconversion between ADP-D-glycero-beta-D-manno-heptose and ADP-L-glycero-beta-D-manno-heptose via an epimerization at carbon 6 of the heptose. This Pseudomonas aeruginosa (strain ATCC 15692 / DSM 22644 / CIP 104116 / JCM 14847 / LMG 12228 / 1C / PRS 101 / PAO1) protein is ADP-L-glycero-D-manno-heptose-6-epimerase.